Here is a 55-residue protein sequence, read N- to C-terminus: Large ribosomal subunit protein bL33 (55 aa).

This sequence belongs to the bacterial ribosomal protein bL33 family.

The protein is Large ribosomal subunit protein bL33 of Rhodopseudomonas palustris (strain HaA2).